The primary structure comprises 99 residues: DNA-binding protein Fis (99 aa).

The tract at residues M1–Q25 is disordered. The H-T-H motif DNA-binding region spans Q75 to K94.

Belongs to the transcriptional regulatory Fis family. As to quaternary structure, homodimer.

Activates ribosomal RNA transcription. Plays a direct role in upstream activation of rRNA promoters. In Psychromonas ingrahamii (strain DSM 17664 / CCUG 51855 / 37), this protein is DNA-binding protein Fis.